A 578-amino-acid polypeptide reads, in one-letter code: Pentatricopeptide repeat-containing protein At4g22760 (578 aa).

13 PPR repeats span residues 68-102, 103-137, 138-168, 169-203, 204-230, 231-261, 262-292, 293-327, 330-364, 365-395, 396-430, 431-465, and 466-496; these read DSFS…GIPP, SSHA…GLCG, CVYV…IAEK, NTVS…DAVS, WNLI…MPLK, SPAS…MPQK, NGVS…MSKK, DKLV…NSYI, DEIT…GIKI, DDLL…LNKK, DTVS…KIPP, NVVT…NLEP, and SADH…MPMQ. Residues 501-576 form a type E motif region; that stretch reads VWGALLLASG…TLGCSWVEGS (76 aa).

The protein belongs to the PPR family. PCMP-E subfamily.

The sequence is that of Pentatricopeptide repeat-containing protein At4g22760 (PCMP-E6) from Arabidopsis thaliana (Mouse-ear cress).